The chain runs to 100 residues: Small ribosomal subunit protein uS14c (100 aa).

This sequence belongs to the universal ribosomal protein uS14 family. As to quaternary structure, part of the 30S ribosomal subunit.

The protein resides in the plastid. It localises to the chloroplast. Binds 16S rRNA, required for the assembly of 30S particles. The polypeptide is Small ribosomal subunit protein uS14c (Calycanthus floridus var. glaucus (Eastern sweetshrub)).